A 155-amino-acid polypeptide reads, in one-letter code: Small ribosomal subunit protein uS7cz/uS7cy (155 aa).

The protein belongs to the universal ribosomal protein uS7 family. In terms of assembly, part of the 30S ribosomal subunit.

It is found in the plastid. The protein resides in the chloroplast. Its function is as follows. One of the primary rRNA binding proteins, it binds directly to 16S rRNA where it nucleates assembly of the head domain of the 30S subunit. The polypeptide is Small ribosomal subunit protein uS7cz/uS7cy (rps7-A) (Ceratophyllum demersum (Rigid hornwort)).